A 164-amino-acid polypeptide reads, in one-letter code: MTGILAEPETWVAVAFVILMGVFAYFGVHRTVLKSLDNRRDRIKAELDEAARLKEEAAALLAEYKARRASAEREAQEIIAGAKDEAERIAAEAKAKLEDFVARRTKTAEGKIALAEAQAVADVRSAAANAAVAAASTILSQSVKGQVAEGLLQRGIEEVRSKLN.

A helical membrane pass occupies residues 8-28; the sequence is PETWVAVAFVILMGVFAYFGV.

Belongs to the ATPase B chain family. In terms of assembly, F-type ATPases have 2 components, F(1) - the catalytic core - and F(0) - the membrane proton channel. F(1) has five subunits: alpha(3), beta(3), gamma(1), delta(1), epsilon(1). F(0) has three main subunits: a(1), b(2) and c(10-14). The alpha and beta chains form an alternating ring which encloses part of the gamma chain. F(1) is attached to F(0) by a central stalk formed by the gamma and epsilon chains, while a peripheral stalk is formed by the delta and b chains.

It is found in the cell inner membrane. F(1)F(0) ATP synthase produces ATP from ADP in the presence of a proton or sodium gradient. F-type ATPases consist of two structural domains, F(1) containing the extramembraneous catalytic core and F(0) containing the membrane proton channel, linked together by a central stalk and a peripheral stalk. During catalysis, ATP synthesis in the catalytic domain of F(1) is coupled via a rotary mechanism of the central stalk subunits to proton translocation. Functionally, component of the F(0) channel, it forms part of the peripheral stalk, linking F(1) to F(0). This chain is ATP synthase subunit b 1, found in Rhodopseudomonas palustris (strain BisB18).